A 155-amino-acid polypeptide reads, in one-letter code: uncharacterized protein (155 aa).

Disordered regions lie at residues 1–22 (MSSQKGNVTRSRPQKHQNTFTF) and 110–155 (NKEP…DTQA). The residue at position 2 (Ser-2) is an N-acetylserine. A phosphoserine mark is found at Ser-136, Ser-144, and Ser-146. A compositionally biased stretch (acidic residues) spans 136–155 (SDEDLDAESDSDGEDGDTQA).

This is an uncharacterized protein from Mus musculus (Mouse).